A 321-amino-acid polypeptide reads, in one-letter code: Torsin-2A (321 aa).

The N-terminal stretch at 1-27 (MAVARHGCPPWGSILGLLVLALAAAAA) is a signal peptide. 93–100 (GWTGTGKS) is an ATP binding site. N-linked (GlcNAc...) asparagine glycosylation occurs at N149.

This sequence belongs to the ClpA/ClpB family. Torsin subfamily. As to quaternary structure, homohexamer. Interacts with TOR1AIP1.

It localises to the endoplasmic reticulum lumen. The chain is Torsin-2A (Tor2a) from Rattus norvegicus (Rat).